Here is a 593-residue protein sequence, read N- to C-terminus: Proline--tRNA ligase (593 aa).

It belongs to the class-II aminoacyl-tRNA synthetase family. ProS type 1 subfamily. As to quaternary structure, homodimer.

It is found in the cytoplasm. The enzyme catalyses tRNA(Pro) + L-proline + ATP = L-prolyl-tRNA(Pro) + AMP + diphosphate. Its function is as follows. Catalyzes the attachment of proline to tRNA(Pro) in a two-step reaction: proline is first activated by ATP to form Pro-AMP and then transferred to the acceptor end of tRNA(Pro). As ProRS can inadvertently accommodate and process non-cognate amino acids such as alanine and cysteine, to avoid such errors it has two additional distinct editing activities against alanine. One activity is designated as 'pretransfer' editing and involves the tRNA(Pro)-independent hydrolysis of activated Ala-AMP. The other activity is designated 'posttransfer' editing and involves deacylation of mischarged Ala-tRNA(Pro). The misacylated Cys-tRNA(Pro) is not edited by ProRS. This is Proline--tRNA ligase from Parasynechococcus marenigrum (strain WH8102).